The primary structure comprises 400 residues: Arrestin, lateral eye (400 aa).

It belongs to the arrestin family. Phosphorylated.

Its function is as follows. Plays an important role in the photoreceptor transduction. The sequence is that of Arrestin, lateral eye from Limulus polyphemus (Atlantic horseshoe crab).